A 602-amino-acid chain; its full sequence is Type II restriction enzyme StsI (602 aa).

It catalyses the reaction Endonucleolytic cleavage of DNA to give specific double-stranded fragments with terminal 5'-phosphates.. An S subtype restriction enzyme that recognizes the double-stranded sequences 5'-GGATG-3' and 3'-CATCC-5' and cleaves respectively 15 bases after G-1 and 14 bases before C-1. The chain is Type II restriction enzyme StsI (stsIR) from Streptococcus sanguinis.